A 505-amino-acid chain; its full sequence is Aminoaldehyde dehydrogenase 1a (505 aa).

Asp101 contacts Na(+). NAD(+)-binding positions include 161 to 163 (TPW) and 187 to 190 (KPSE). A Na(+)-binding site is contributed by Leu191. NAD(+) contacts are provided by residues 241 to 244 (SFET) and Glu262. Residue Glu262 is the Proton acceptor of the active site. Cys296 functions as the Nucleophile in the catalytic mechanism. NAD(+) is bound by residues Glu395 and Trp461.

This sequence belongs to the aldehyde dehydrogenase family. As to quaternary structure, forms homodimers.

It carries out the reaction 4-aminobutanal + NAD(+) + H2O = 4-aminobutanoate + NADH + 2 H(+). The enzyme catalyses 3-aminopropanal + NAD(+) + H2O = beta-alanine + NADH + 2 H(+). The catalysed reaction is 4-(trimethylamino)butanal + NAD(+) + H2O = 4-(trimethylamino)butanoate + NADH + 2 H(+). It catalyses the reaction 4-guanidinobutanal + NAD(+) + H2O = 4-guanidinobutanoate + NADH + 2 H(+). It carries out the reaction betaine aldehyde + NAD(+) + H2O = glycine betaine + NADH + 2 H(+). It participates in amine and polyamine biosynthesis; betaine biosynthesis via choline pathway; betaine from betaine aldehyde: step 1/1. In terms of biological role, dehydrogenase that catalyzes the oxidation of several aminoaldehydes. Metabolizes and detoxifies aldehyde products of polyamine degradation to non-toxic amino acids. Catalyzes the oxidation of 4-aminobutanal and 3-aminopropanal to 4-aminobutanoate and beta-alanine, respectively. Catalyzes the oxidation of 4-(trimethylamino)butanal and 4-guanidinobutanal to 4-trimethylammoniobutanoate and 4-guanidinobutanoate, respectively. Catalyzes the oxidation of betaine aldehyde to glycine betaine. Its function is as follows. Dehydrogenase that catalyzes the oxidation of several aminoaldehydes. Catalyzes the oxidation of betaine aldehyde to glycine betaine. Catalyzes the oxidation of 4-(trimethylamino)butanal to 4-trimethylammoniobutanoate. In Zea mays (Maize), this protein is Aminoaldehyde dehydrogenase 1a.